The sequence spans 163 residues: Putative 4-hydroxy-4-methyl-2-oxoglutarate aldolase (163 aa).

Substrate contacts are provided by residues 76–79 and Arg-98; that span reads GDML. Asp-99 is a binding site for a divalent metal cation.

The protein belongs to the class II aldolase/RraA-like family. Homotrimer. It depends on a divalent metal cation as a cofactor.

The catalysed reaction is 4-hydroxy-4-methyl-2-oxoglutarate = 2 pyruvate. It carries out the reaction oxaloacetate + H(+) = pyruvate + CO2. Catalyzes the aldol cleavage of 4-hydroxy-4-methyl-2-oxoglutarate (HMG) into 2 molecules of pyruvate. Also contains a secondary oxaloacetate (OAA) decarboxylase activity due to the common pyruvate enolate transition state formed following C-C bond cleavage in the retro-aldol and decarboxylation reactions. This Pseudomonas entomophila (strain L48) protein is Putative 4-hydroxy-4-methyl-2-oxoglutarate aldolase.